A 312-amino-acid chain; its full sequence is Ribosomal RNA small subunit methyltransferase H (312 aa).

S-adenosyl-L-methionine is bound by residues 33–35 (GGH), aspartate 52, phenylalanine 81, aspartate 102, and glutamine 109.

Belongs to the methyltransferase superfamily. RsmH family.

It localises to the cytoplasm. It carries out the reaction cytidine(1402) in 16S rRNA + S-adenosyl-L-methionine = N(4)-methylcytidine(1402) in 16S rRNA + S-adenosyl-L-homocysteine + H(+). Specifically methylates the N4 position of cytidine in position 1402 (C1402) of 16S rRNA. This chain is Ribosomal RNA small subunit methyltransferase H, found in Leuconostoc mesenteroides subsp. mesenteroides (strain ATCC 8293 / DSM 20343 / BCRC 11652 / CCM 1803 / JCM 6124 / NCDO 523 / NBRC 100496 / NCIMB 8023 / NCTC 12954 / NRRL B-1118 / 37Y).